Reading from the N-terminus, the 351-residue chain is Transaldolase (351 aa).

K138 acts as the Schiff-base intermediate with substrate in catalysis.

Belongs to the transaldolase family. Type 2 subfamily.

The protein resides in the cytoplasm. The enzyme catalyses D-sedoheptulose 7-phosphate + D-glyceraldehyde 3-phosphate = D-erythrose 4-phosphate + beta-D-fructose 6-phosphate. It functions in the pathway carbohydrate degradation; pentose phosphate pathway; D-glyceraldehyde 3-phosphate and beta-D-fructose 6-phosphate from D-ribose 5-phosphate and D-xylulose 5-phosphate (non-oxidative stage): step 2/3. Transaldolase is important for the balance of metabolites in the pentose-phosphate pathway. This Neisseria meningitidis serogroup C / serotype 2a (strain ATCC 700532 / DSM 15464 / FAM18) protein is Transaldolase.